The sequence spans 201 residues: NAD(P)H dehydrogenase (quinone) (201 aa).

In terms of domain architecture, Flavodoxin-like spans 7 to 192; sequence ILVLYYSMYG…SIARYQGEYV (186 aa). FMN contacts are provided by residues 13–18 and 81–83; these read SMYGHI and TRF. Tyr15 is a binding site for NAD(+). Trp101 serves as a coordination point for substrate. Residues 116 to 121 and His136 each bind FMN; that span reads STGTGG.

This sequence belongs to the WrbA family. FMN is required as a cofactor.

The enzyme catalyses a quinone + NADH + H(+) = a quinol + NAD(+). It catalyses the reaction a quinone + NADPH + H(+) = a quinol + NADP(+). In Shigella sonnei (strain Ss046), this protein is NAD(P)H dehydrogenase (quinone).